Consider the following 30-residue polypeptide: Cytochrome b6-f complex subunit 8 (30 aa).

Residues 4–24 (IISLGWGSLLAIFSFSIALVV) form a helical membrane-spanning segment.

Belongs to the PetN family. The 4 large subunits of the cytochrome b6-f complex are cytochrome b6, subunit IV (17 kDa polypeptide, PetD), cytochrome f and the Rieske protein, while the 4 small subunits are PetG, PetL, PetM and PetN. The complex functions as a dimer.

It is found in the plastid. The protein resides in the chloroplast thylakoid membrane. Its function is as follows. Component of the cytochrome b6-f complex, which mediates electron transfer between photosystem II (PSII) and photosystem I (PSI), cyclic electron flow around PSI, and state transitions. The polypeptide is Cytochrome b6-f complex subunit 8 (Gracilaria tenuistipitata var. liui (Red alga)).